A 400-amino-acid polypeptide reads, in one-letter code: Acetylornithine aminotransferase (400 aa).

Residues G113–A114 and F139 each bind pyridoxal 5'-phosphate. Residue R142 participates in N(2)-acetyl-L-ornithine binding. D224 to Q227 contacts pyridoxal 5'-phosphate. K253 is subject to N6-(pyridoxal phosphate)lysine. S281 provides a ligand contact to N(2)-acetyl-L-ornithine. T282 is a binding site for pyridoxal 5'-phosphate.

It belongs to the class-III pyridoxal-phosphate-dependent aminotransferase family. ArgD subfamily. As to quaternary structure, homodimer. Pyridoxal 5'-phosphate is required as a cofactor.

The protein localises to the cytoplasm. It catalyses the reaction N(2)-acetyl-L-ornithine + 2-oxoglutarate = N-acetyl-L-glutamate 5-semialdehyde + L-glutamate. The protein operates within amino-acid biosynthesis; L-arginine biosynthesis; N(2)-acetyl-L-ornithine from L-glutamate: step 4/4. The protein is Acetylornithine aminotransferase of Mycobacterium bovis (strain ATCC BAA-935 / AF2122/97).